The sequence spans 208 residues: Imidazole glycerol phosphate synthase subunit HisH (208 aa).

One can recognise a Glutamine amidotransferase type-1 domain in the interval 1-206 (MIVIVDYDTG…KEMTEDEALS (206 aa)). The Nucleophile role is filled by cysteine 79. Residues histidine 181 and glutamate 183 contribute to the active site.

In terms of assembly, heterodimer of HisH and HisF.

Its subcellular location is the cytoplasm. It carries out the reaction 5-[(5-phospho-1-deoxy-D-ribulos-1-ylimino)methylamino]-1-(5-phospho-beta-D-ribosyl)imidazole-4-carboxamide + L-glutamine = D-erythro-1-(imidazol-4-yl)glycerol 3-phosphate + 5-amino-1-(5-phospho-beta-D-ribosyl)imidazole-4-carboxamide + L-glutamate + H(+). It catalyses the reaction L-glutamine + H2O = L-glutamate + NH4(+). The protein operates within amino-acid biosynthesis; L-histidine biosynthesis; L-histidine from 5-phospho-alpha-D-ribose 1-diphosphate: step 5/9. Functionally, IGPS catalyzes the conversion of PRFAR and glutamine to IGP, AICAR and glutamate. The HisH subunit catalyzes the hydrolysis of glutamine to glutamate and ammonia as part of the synthesis of IGP and AICAR. The resulting ammonia molecule is channeled to the active site of HisF. The sequence is that of Imidazole glycerol phosphate synthase subunit HisH from Lacticaseibacillus casei (strain BL23) (Lactobacillus casei).